Consider the following 290-residue polypeptide: 4-diphosphocytidyl-2-C-methyl-D-erythritol kinase (290 aa).

Lys11 is an active-site residue. An ATP-binding site is contributed by 97–107 (PVAAGIGGGSS). The active site involves Asp139.

It belongs to the GHMP kinase family. IspE subfamily.

It catalyses the reaction 4-CDP-2-C-methyl-D-erythritol + ATP = 4-CDP-2-C-methyl-D-erythritol 2-phosphate + ADP + H(+). The protein operates within isoprenoid biosynthesis; isopentenyl diphosphate biosynthesis via DXP pathway; isopentenyl diphosphate from 1-deoxy-D-xylulose 5-phosphate: step 3/6. Catalyzes the phosphorylation of the position 2 hydroxy group of 4-diphosphocytidyl-2C-methyl-D-erythritol. The protein is 4-diphosphocytidyl-2-C-methyl-D-erythritol kinase of Methylobacterium radiotolerans (strain ATCC 27329 / DSM 1819 / JCM 2831 / NBRC 15690 / NCIMB 10815 / 0-1).